The primary structure comprises 3374 residues: Abnormal spindle-like microcephaly-associated protein homolog (3374 aa).

Phosphoserine is present on residues Ser212, Ser215, Ser300, and Ser325. A disordered region spans residues 492 to 518 (SSKNIVTPPCKAASVARKRKSKGHTGD). Phosphoserine is present on Ser540. The region spanning 855–991 (KASXDILLAF…LLWKIALAFQ (137 aa)) is the Calponin-homology (CH) 1 domain. Positions 992–1013 (VDISLNLDQLKEEIDFLKKTQS) form a coiled coil. At Ser1038 the chain carries Phosphoserine. The Calponin-homology (CH) 2 domain maps to 1045 to 1196 (SESVKLLMDW…YLSFLCARLL (152 aa)). IQ domains are found at residues 1201-1230 (ETRA…RDKA), 1282-1313 (HSKS…IILQ), 1472-1503 (KRAA…VLQS), 1567-1596 (TRSA…AVVK), 1590-1619 (ILTA…ATVK), 1613-1642 (LKKA…IAQQ), 1647-1678 (LRAS…VLLQ), 1720-1749 (VRRA…AALK), 1743-1772 (QSAA…SALK), 1793-1822 (TRTA…AAVK), 1816-1847 (EHEA…SVIQ), 1866-1897 (LRRA…IIIQ), 1939-1968 (TKGA…AATT), 1962-1993 (MHQA…VIIQ), 2012-2043 (VKKA…TLIK), 2035-2066 (MHMA…IVIQ), 2085-2116 (TLKA…TLIQ), 2108-2137 (MRTA…VTKT), 2158-2189 (LRRS…AVIQ), 2181-2212 (MHSA…VWVQ), 2230-2261 (LQKA…TVLQ), 2253-2284 (MRRA…QVIQ), 2303-2334 (QXRS…TLIQ), 2326-2357 (MHAS…VFVQ), 2376-2407 (LKKA…ALIQ), 2399-2430 (MHRA…VLIQ), 2449-2480 (WRHS…VIIQ), 2472-2503 (KHRA…KVIQ), 2542-2573 (QHQA…VFVQ), 2583-2612 (RTQA…AATR), 2606-2637 (MHLA…VVIQ), 2656-2685 (IQKS…EKMA), 2732-2763 (QRKA…QIQS), 2777-2806 (QKRA…AAVG), 2827-2856 (IRSS…STIK), 2850-2881 (LKDS…RIQA), 2872-2903 (EVKA…RIIQ), 2947-2976 (RHQA…AALT), 2997-3028 (LKKS…RLLH), 3099-3128 (HSRA…RIAK), and 3122-3153 (LNKR…IRQR).

It localises to the cytoplasm. Its subcellular location is the cytoskeleton. The protein localises to the spindle. The protein resides in the nucleus. Functionally, probable role in mitotic spindle regulation and coordination of mitotic processes. May have a preferential role in regulating neurogenesis. In Ovis aries (Sheep), this protein is Abnormal spindle-like microcephaly-associated protein homolog (ASPM).